Here is a 152-residue protein sequence, read N- to C-terminus: Xanthine-guanine phosphoribosyltransferase (152 aa).

5-phospho-alpha-D-ribose 1-diphosphate is bound by residues 37–38, Arg69, and 88–96; these read RG and DDLVDTGGT. Arg69 provides a ligand contact to GMP. Asp89 serves as a coordination point for Mg(2+). Guanine-binding residues include Asp92 and Ile135. The xanthine site is built by Asp92 and Ile135. GMP is bound by residues 92-96 and 134-135; these read DTGGT and WI.

It belongs to the purine/pyrimidine phosphoribosyltransferase family. XGPT subfamily. As to quaternary structure, homotetramer. Requires Mg(2+) as cofactor.

It localises to the cell inner membrane. It carries out the reaction GMP + diphosphate = guanine + 5-phospho-alpha-D-ribose 1-diphosphate. It catalyses the reaction XMP + diphosphate = xanthine + 5-phospho-alpha-D-ribose 1-diphosphate. The enzyme catalyses IMP + diphosphate = hypoxanthine + 5-phospho-alpha-D-ribose 1-diphosphate. It functions in the pathway purine metabolism; GMP biosynthesis via salvage pathway; GMP from guanine: step 1/1. It participates in purine metabolism; XMP biosynthesis via salvage pathway; XMP from xanthine: step 1/1. Its function is as follows. Purine salvage pathway enzyme that catalyzes the transfer of the ribosyl-5-phosphate group from 5-phospho-alpha-D-ribose 1-diphosphate (PRPP) to the N9 position of the 6-oxopurines guanine and xanthine to form the corresponding ribonucleotides GMP (guanosine 5'-monophosphate) and XMP (xanthosine 5'-monophosphate), with the release of PPi. To a lesser extent, also acts on hypoxanthine. In Citrobacter koseri (strain ATCC BAA-895 / CDC 4225-83 / SGSC4696), this protein is Xanthine-guanine phosphoribosyltransferase.